Consider the following 240-residue polypeptide: T4 protein (240 aa).

The protein belongs to the poxviruses B9 family.

The protein is T4 protein of Sheeppox virus (strain InS-1) (SPPV).